Reading from the N-terminus, the 192-residue chain is Probable nicotinate-nucleotide adenylyltransferase (192 aa).

This sequence belongs to the NadD family.

It catalyses the reaction nicotinate beta-D-ribonucleotide + ATP + H(+) = deamido-NAD(+) + diphosphate. It functions in the pathway cofactor biosynthesis; NAD(+) biosynthesis; deamido-NAD(+) from nicotinate D-ribonucleotide: step 1/1. In terms of biological role, catalyzes the reversible adenylation of nicotinate mononucleotide (NaMN) to nicotinic acid adenine dinucleotide (NaAD). This is Probable nicotinate-nucleotide adenylyltransferase from Bradyrhizobium sp. (strain ORS 278).